Reading from the N-terminus, the 529-residue chain is MLQPPTLTPNANGEEFRGSVSTDRSSASPSNIDEIMEDDVNQKDEDEDLNLVDRVSKLETNFVFIQHQLSSIMNHLHAPQCKCTTCSKVNQPGAEEQKNDTSVLSQLFPNASDQQLKTLLDLSKMNKLPSQVVHKDQQNGSSFLPSANKTSENPKPIELKPLKLGQGYQMANGGGGGKIHTERLSEPARKQSRKVGFPPPVASYYQRKESSNPLVPPTPLSSIPNLITNSNAVSANTSTASPGPSSEGSGDDHLEAPNEVAHMHSSTVPATPTTPGANLFTQSMVDMLKLNAQNAAHSTGSPGFLRGRGRGRPKLIGDELDADLVDYMVSLKNSDPHGGHFTASQALHMARQYILERAPGLLEEHGGHVKLKLTWAMKLVSRIGERQREIELGLPAGTLSNMGRNLTNIPAGGNFMADMMAQNIFSQHMMMVNQQLEGGSPPASSSSTATTSTATKTVKQESKNGHQNEENLNVKQEASTMPEIINIKELNLPFLNNFLAELNDNNSGLIDGEIGAAGPSMAALFAPNA.

Disordered stretches follow at residues 1 to 39 (MLQP…MEDD), 131 to 158 (QVVH…KPIE), 173 to 200 (GGGG…FPPP), and 233 to 255 (VSAN…DHLE). Composition is skewed to polar residues over residues 19–31 (SVST…SPSN) and 138–153 (QNGS…TSEN). Residues 179–189 (IHTERLSEPAR) are compositionally biased toward basic and acidic residues. Over residues 233–248 (VSANTSTASPGPSSEG) the composition is skewed to low complexity. A DNA-binding region (a.T hook) is located at residues 307 to 319 (GRGRGRPKLIGDE). A disordered region spans residues 436–476 (LEGGSPPASSSSTATTSTATKTVKQESKNGHQNEENLNVKQ). The segment covering 443 to 455 (ASSSSTATTSTAT) has biased composition (low complexity). Over residues 458–469 (VKQESKNGHQNE) the composition is skewed to basic and acidic residues.

This is AT hook-containing protein attf-4 from Caenorhabditis elegans.